Consider the following 122-residue polypeptide: MAAPVDLELKKAFTELQAKVIDTQQKVKLADIQIEQLNRTKKHAHLTDTEIMTLVDETNMYEGVGRMFILQSKEAIHSQLLEKQKIAEEKIKELEQKKSYLERSVKEAEDNIREMLMARRAQ.

Ala-2 carries the post-translational modification N-acetylalanine.

It belongs to the prefoldin subunit beta family. In terms of assembly, heterohexamer of two PFD-alpha type and four PFD-beta type subunits.

Binds specifically to cytosolic chaperonin (c-CPN) and transfers target proteins to it. Binds to nascent polypeptide chain and promotes folding in an environment in which there are many competing pathways for nonnative proteins. The protein is Prefoldin subunit 1 (PFDN1) of Homo sapiens (Human).